Here is a 366-residue protein sequence, read N- to C-terminus: tRNA-specific 2-thiouridylase MnmA (366 aa).

ATP is bound by residues 10-17 and I36; that span reads GLSGGVDS. The active-site Nucleophile is C98. C98 and C194 form a disulfide bridge. G122 is an ATP binding site. The interaction with tRNA stretch occupies residues 144 to 146; sequence KDQ. C194 functions as the Cysteine persulfide intermediate in the catalytic mechanism. Residues 303–304 are interaction with tRNA; it reads RY.

This sequence belongs to the MnmA/TRMU family.

It is found in the cytoplasm. It carries out the reaction S-sulfanyl-L-cysteinyl-[protein] + uridine(34) in tRNA + AH2 + ATP = 2-thiouridine(34) in tRNA + L-cysteinyl-[protein] + A + AMP + diphosphate + H(+). Functionally, catalyzes the 2-thiolation of uridine at the wobble position (U34) of tRNA, leading to the formation of s(2)U34. The chain is tRNA-specific 2-thiouridylase MnmA from Chlorobaculum tepidum (strain ATCC 49652 / DSM 12025 / NBRC 103806 / TLS) (Chlorobium tepidum).